The chain runs to 581 residues: MKASQFFVSTLKEAPADAEVVSHKLMTRAGLIKKLGAGIYNYMPMGLRVIRKVEAIVREEMNRAGAVEVTMPVVQPAEYWQETGRFDKMGPELLRIRDRHGRDFVVQPTSEEVVTDIARQELRSYKQLPKNLYQIQTKFRDERRPRFGLMRGREFIMKDAYSFDRDQAAAKASYQVMAQAYRRIFDRFGLTYRAVAADSGAIGGDLSEEFQVIAATGEDAIVYCPQSDYAANMEKAEALPPQGPRPAASQALARTATPGKSTCADVAQLLGVPLQATVKSLVLATDETNESGEIVRSQVWLLLLRGDHDMNEIKVGKVPGLDAGFRFATVGEIEDHFGCRPGYLGPLNLRQPVRLVVDREVAVMADWICGANEVDFHMTGVNWGRDLPEPDVVADLRNVVAGDPSPDGKGTLAIERGIEVGHVFYLGTKYSRAMNATFLGEDGKPAFFEMGCYGIGITRLPAAAIEQNHDERGIIWPDAIAPFTVVVCPIGMDRSDEVRAAAEKLHADLLTAGVDVILDDRGERPGAMFADWELIGVPHRVVLSDRGLKEGQVEYQHRRDAAATKVASADIFAFIKDRIKV.

Belongs to the class-II aminoacyl-tRNA synthetase family. ProS type 1 subfamily. Homodimer.

The protein localises to the cytoplasm. It carries out the reaction tRNA(Pro) + L-proline + ATP = L-prolyl-tRNA(Pro) + AMP + diphosphate. Functionally, catalyzes the attachment of proline to tRNA(Pro) in a two-step reaction: proline is first activated by ATP to form Pro-AMP and then transferred to the acceptor end of tRNA(Pro). As ProRS can inadvertently accommodate and process non-cognate amino acids such as alanine and cysteine, to avoid such errors it has two additional distinct editing activities against alanine. One activity is designated as 'pretransfer' editing and involves the tRNA(Pro)-independent hydrolysis of activated Ala-AMP. The other activity is designated 'posttransfer' editing and involves deacylation of mischarged Ala-tRNA(Pro). The misacylated Cys-tRNA(Pro) is not edited by ProRS. The polypeptide is Proline--tRNA ligase (Paracidovorax citrulli (strain AAC00-1) (Acidovorax citrulli)).